The chain runs to 259 residues: DNA-directed RNA polymerase 30 kDa polypeptide (259 aa).

Residues Tyr155–Lys195 form a TFIIS-type zinc finger. Zn(2+) contacts are provided by Cys159, Cys162, Cys187, and Cys190. Residues Glu214–Glu259 form a disordered region. Positions Asn226 to Ala236 are enriched in pro residues.

This sequence belongs to the poxviridae DNA-directed RNA polymerase 30 kDa subunit family. As to quaternary structure, the DNA-dependent RNA polymerase (vRNAP) consists of eight subunits encoded by early viral genes and termed according to their apparent molecular masses Rpo147, Rpo132, Rpo35, Rpo30, Rpo22, Rpo19, Rpo18, and Rpo7. The same holoenzyme, with the addition of the transcription-specificity factor RAP94, is used for early gene expression.

The protein localises to the virion. It localises to the host cytoplasm. It catalyses the reaction RNA(n) + a ribonucleoside 5'-triphosphate = RNA(n+1) + diphosphate. In terms of biological role, part of the DNA-dependent RNA polymerase which catalyzes the transcription of viral DNA into RNA using the four ribonucleoside triphosphates as substrates. Responsible for the transcription of early, intermediate and late genes. DNA-dependent RNA polymerase associates with the early transcription factor (ETF), itself composed of OPG118/D6 and OPG134/A8, thereby allowing the early genes transcription. Late transcription, and probably also intermediate transcription, require newly synthesized RNA polymerase. This Homo sapiens (Human) protein is DNA-directed RNA polymerase 30 kDa polypeptide (OPG066).